The chain runs to 805 residues: Cell division cycle protein 48 homolog (805 aa).

ATP contacts are provided by residues 249 to 256 and 522 to 529; these read GPPGSGKT and GPPGCGKT. The tract at residues 783-805 is disordered; sequence GATAAADPFATSNAAADDDDLYS.

Belongs to the AAA ATPase family.

Its function is as follows. Probably functions in cell division and growth processes. This is Cell division cycle protein 48 homolog (CAFP) from Capsicum annuum (Capsicum pepper).